A 286-amino-acid chain; its full sequence is 4-hydroxy-tetrahydrodipicolinate synthase (286 aa).

Threonine 42 serves as a coordination point for pyruvate. The active-site Proton donor/acceptor is tyrosine 129. Catalysis depends on lysine 157, which acts as the Schiff-base intermediate with substrate. Isoleucine 196 is a pyruvate binding site.

The protein belongs to the DapA family. In terms of assembly, homotetramer; dimer of dimers.

It is found in the cytoplasm. It catalyses the reaction L-aspartate 4-semialdehyde + pyruvate = (2S,4S)-4-hydroxy-2,3,4,5-tetrahydrodipicolinate + H2O + H(+). Its pathway is amino-acid biosynthesis; L-lysine biosynthesis via DAP pathway; (S)-tetrahydrodipicolinate from L-aspartate: step 3/4. Catalyzes the condensation of (S)-aspartate-beta-semialdehyde [(S)-ASA] and pyruvate to 4-hydroxy-tetrahydrodipicolinate (HTPA). This chain is 4-hydroxy-tetrahydrodipicolinate synthase, found in Chlamydia trachomatis serovar A (strain ATCC VR-571B / DSM 19440 / HAR-13).